The chain runs to 340 residues: MVNVLINGYGSIGKRVADAVAKQDDMKVIGVTKTKPDFEARMAVEKGYKLFAAIPERKHLFEEAGIPVEGTLDDIIEDADIVVDGAPKKIGKANLENVYKKHGVKAIIQGGEKAGDAQDSFNSLWSYNRCYGKDYIRLVSCNTTGLCRSMYAINSVADILKARIVLIRRAADPNDVKTGPVNAIVPNPVSVPSHHGPDVVSVIPELDGKIMTSAVIVPTTLMHMHSIMVETSGTNRDEIIDALAKTPRILTLKASEGFDSTAKIIEYARDLGRSRYDLNEIAVWEESVNVVDNEVYMMQAIHQESDVIPENVDCIRAMLEMESDNLKSIEKTNKAMGLIK.

NAD(+) is bound by residues 11–12 and glycine 111; that span reads SI. 140–142 is a binding site for D-glyceraldehyde 3-phosphate; the sequence is SCN. Cysteine 141 (nucleophile) is an active-site residue. Arginine 169 is an NAD(+) binding site. Residue 195–196 coordinates D-glyceraldehyde 3-phosphate; it reads HG. Residue glutamine 303 participates in NAD(+) binding.

It belongs to the glyceraldehyde-3-phosphate dehydrogenase family. In terms of assembly, homotetramer.

It is found in the cytoplasm. The enzyme catalyses D-glyceraldehyde 3-phosphate + phosphate + NADP(+) = (2R)-3-phospho-glyceroyl phosphate + NADPH + H(+). It catalyses the reaction D-glyceraldehyde 3-phosphate + phosphate + NAD(+) = (2R)-3-phospho-glyceroyl phosphate + NADH + H(+). The protein operates within carbohydrate degradation; glycolysis; pyruvate from D-glyceraldehyde 3-phosphate: step 1/5. In Methanococcus maripaludis (strain C6 / ATCC BAA-1332), this protein is Glyceraldehyde-3-phosphate dehydrogenase.